The following is an 899-amino-acid chain: Lipoxygenase 2, chloroplastic (899 aa).

Residues 1-57 (MLKPQIHKPHLVNKLPLGTPFIPSHASIASFSTTSLRTLSVQKCYRRYIRYTSSNIK) constitute a chloroplast transit peptide. The region spanning 83 to 203 (ALTAVTVGLL…DNPDKRIFFL (121 aa)) is the PLAT domain. A Lipoxygenase domain is found at 206–899 (SYLPSETPEG…GKGVPYSISI (694 aa)). The disordered stretch occupies residues 252 to 286 (DPDTDSDMARPVLGGNEHPFPRRCRTGRKMTSTEP). Fe cation is bound by residues His-557, His-562, His-749, Asn-753, and Ile-899.

It belongs to the lipoxygenase family. The cofactor is Fe cation. Confined to glandular trichomes in flowers.

The protein localises to the plastid. The protein resides in the chloroplast. It participates in lipid metabolism; oxylipin biosynthesis. Functionally, plant lipoxygenases may be involved in a number of diverse aspects of plant physiology including growth and development, pest resistance, and senescence or responses to wounding. Catalyzes the hydroperoxidation of lipids containing a cis,cis-1,4-pentadiene structure. This is Lipoxygenase 2, chloroplastic from Tanacetum cinerariifolium (Dalmatian daisy).